The sequence spans 293 residues: Elongation factor Ts (293 aa).

The segment at 80-83 is involved in Mg(2+) ion dislocation from EF-Tu; that stretch reads TDFV.

This sequence belongs to the EF-Ts family.

The protein localises to the cytoplasm. Associates with the EF-Tu.GDP complex and induces the exchange of GDP to GTP. It remains bound to the aminoacyl-tRNA.EF-Tu.GTP complex up to the GTP hydrolysis stage on the ribosome. The polypeptide is Elongation factor Ts (Burkholderia pseudomallei (strain 1106a)).